The sequence spans 268 residues: 2,5-diamino-6-ribosylamino-4(3H)-pyrimidinone 5'-phosphate reductase (268 aa).

Residues threonine 68, aspartate 72, 103–106 (SNLR), and 191–195 (GAELL) each bind NADP(+).

This sequence belongs to the HTP reductase family. Homodimer.

The catalysed reaction is 2,5-diamino-6-(1-D-ribitylamino)pyrimidin-4(3H)-one 5'-phosphate + NADP(+) = 2,5-diamino-6-(1-D-ribosylamino)pyrimidin-4(3H)-one 5'-phosphate + NADPH + H(+). It catalyses the reaction 2,5-diamino-6-(1-D-ribitylamino)pyrimidin-4(3H)-one 5'-phosphate + NAD(+) = 2,5-diamino-6-(1-D-ribosylamino)pyrimidin-4(3H)-one 5'-phosphate + NADH + H(+). It participates in cofactor biosynthesis; riboflavin biosynthesis. Functionally, catalyzes an early step in riboflavin biosynthesis, the NADPH-dependent reduction of the ribose side chain of 2,5-diamino-6-ribosylamino-4(3H)-pyrimidinone 5'-phosphate, yielding 2,5-diamino-6-ribitylamino-4(3H)-pyrimidinone 5'-phosphate. The polypeptide is 2,5-diamino-6-ribosylamino-4(3H)-pyrimidinone 5'-phosphate reductase (Schizosaccharomyces pombe (strain 972 / ATCC 24843) (Fission yeast)).